Reading from the N-terminus, the 310-residue chain is Cytosolic Fe-S cluster assembly factor Nubp1 homolog (310 aa).

Positions 9, 23, 26, and 32 each coordinate [4Fe-4S] cluster. 63 to 70 (GKGGVGKS) lines the ATP pocket. Residues cysteine 240 and cysteine 243 each contribute to the [4Fe-4S] cluster site.

Belongs to the Mrp/NBP35 ATP-binding proteins family. NUBP1/NBP35 subfamily. In terms of assembly, heterotetramer of 2 Nubp1 and 2 Nubp2 chains. [4Fe-4S] cluster is required as a cofactor.

Its subcellular location is the cytoplasm. Its function is as follows. Component of the cytosolic iron-sulfur (Fe/S) protein assembly (CIA) machinery. Required for maturation of extramitochondrial Fe-S proteins. The Nubp1-Nubp2 heterotetramer forms a Fe-S scaffold complex, mediating the de novo assembly of an Fe-S cluster and its transfer to target apoproteins. The protein is Cytosolic Fe-S cluster assembly factor Nubp1 homolog of Drosophila virilis (Fruit fly).